We begin with the raw amino-acid sequence, 281 residues long: Auxin-responsive protein IAA19 (281 aa).

An EAR-like (transcriptional repression) motif is present at residues 40–44 (LRLGL). Residues 66-126 (LGPAPPPRGG…AAGAPRAAKA (61 aa)) are disordered. Residues 79-91 (GFVDSLDRSEGRR) are compositionally biased toward basic and acidic residues. The span at 114 to 126 (GEAAAGAPRAAKA) shows a compositional bias: low complexity. The 105-residue stretch at 161 to 265 (CCYVKVSMDG…RKLRIMRGSD (105 aa)) folds into the PB1 domain.

It belongs to the Aux/IAA family. In terms of assembly, homodimers and heterodimers. In terms of tissue distribution, expressed in etiolated seedlings and flowers.

It is found in the nucleus. Its function is as follows. Aux/IAA proteins are short-lived transcriptional factors that function as repressors of early auxin response genes at low auxin concentrations. This is Auxin-responsive protein IAA19 (IAA19) from Oryza sativa subsp. japonica (Rice).